Here is a 395-residue protein sequence, read N- to C-terminus: MLRFLTAGESHGPGLTIIVEGIPADLPLLAEDIDRDLARRQVGFGRGGRMSIETDRVTFRGGVRLGRTIGSPIAMTLENRDFKNWEVPMSVSPVDLDDEAVRAQLEAKRITRLRPGHADYPGAVKYGLADVRNILERSSARETASRVAAGAIAKQLLRQFNVHVHSHVVEIGGVGAGESVRPALPTFEEWKDLFERVDQNDLRCHPDLYERLRSRVVEAAKGGYTLGGAVELAAYGEIPVGLGSHVHYDRRIDGLLAGAAMSVHTVKAVEVGIGTAAARETGADVQDEFINAAGEIARTSNHAGGIEGGMTNGQPVLLRAYLKPLPTMRKALRSIDLVSREPFEAHYERSDTCAVPAGGVVCEAMMAIVLAQELQRKLGGDSLGEMLRHAGRTHA.

Positions 40 and 46 each coordinate NADP(+). FMN is bound by residues 137–139 (RSS), Gly-308, 323–327 (KPLPT), and Arg-349.

Belongs to the chorismate synthase family. Homotetramer. Requires FMNH2 as cofactor.

It catalyses the reaction 5-O-(1-carboxyvinyl)-3-phosphoshikimate = chorismate + phosphate. The protein operates within metabolic intermediate biosynthesis; chorismate biosynthesis; chorismate from D-erythrose 4-phosphate and phosphoenolpyruvate: step 7/7. Its function is as follows. Catalyzes the anti-1,4-elimination of the C-3 phosphate and the C-6 proR hydrogen from 5-enolpyruvylshikimate-3-phosphate (EPSP) to yield chorismate, which is the branch point compound that serves as the starting substrate for the three terminal pathways of aromatic amino acid biosynthesis. This reaction introduces a second double bond into the aromatic ring system. In Gloeobacter violaceus (strain ATCC 29082 / PCC 7421), this protein is Chorismate synthase.